The following is a 354-amino-acid chain: Transcription factor ATOH1 (354 aa).

The span at M1–R21 shows a compositional bias: basic and acidic residues. Disordered stretches follow at residues M1–L55 and E91–V122. Positions H26–P38 are enriched in pro residues. Residues A94–R107 show a composition bias toward basic and acidic residues. Residues R108–V122 are compositionally biased toward low complexity. A bHLH domain is found at Q159–L211. Disordered regions lie at residues Q216 to S277 and S312 to S354. A compositionally biased stretch (low complexity) spans N250–Q264. Basic and acidic residues predominate over residues H335–S354.

As to quaternary structure, efficient DNA binding requires dimerization with another bHLH protein.

The protein localises to the nucleus. In terms of biological role, transcriptional regulator. Activates E box-dependent transcription in collaboration with TCF3/E47, but the activity is completely antagonized by the negative regulator of neurogenesis HES1. Plays a role in the differentiation of subsets of neural cells by activating E box-dependent transcription. This Homo sapiens (Human) protein is Transcription factor ATOH1.